Reading from the N-terminus, the 408-residue chain is (R)-2-hydroxyisocaproyl-CoA dehydratase alpha subunit (408 aa).

Residue Glu55 coordinates substrate. The [4Fe-4S] cluster site is built by Cys84, Cys117, and Cys346.

Belongs to the FldB/FldC dehydratase alpha/beta subunit family. In terms of assembly, part of the heterodimeric complex HadBC composed of (R)-2-hydroxyisocaproyl-CoA dehydratase alpha (HadB) and beta (HadC) subunit. [4Fe-4S] cluster is required as a cofactor.

It carries out the reaction (R)-2-hydroxy-4-methylpentanoyl-CoA = 4-methylpent-2-enoyl-CoA + H2O. With respect to regulation, activated by HadI. Its function is as follows. Involved in the reductive branch of L-leucine fermentation. Catalyzes the irreversible beta/alpha-elimination of water from (R)-2-hydroxyisocaproyl-CoA to yield isocaprenoyl-CoA. This beta/alpha-dehydration depends on the reductive formation of ketyl radicals on the substrate generated by injection of a single electron from the ATP-dependent activator protein HadI. The enzyme is specific for the R-isomer. The chain is (R)-2-hydroxyisocaproyl-CoA dehydratase alpha subunit from Clostridioides difficile (Peptoclostridium difficile).